Here is a 318-residue protein sequence, read N- to C-terminus: Dehydration-responsive element-binding protein 2E (318 aa).

Over residues 1–15 (MESYGRKRAWKKGPT) the composition is skewed to basic residues. The disordered stretch occupies residues 1–24 (MESYGRKRAWKKGPTRGKGGPQNA). A DNA-binding region (AP2/ERF) is located at residues 27–84 (EYRGVRQRTWGKWVAEIREPNKRTRLWLGSFATAEEAALAYDEAARRLYGPDAFLNLP). The disordered stretch occupies residues 140-178 (ELKNSSSSPTKPPPRTPTRANPPPPPLPTSSPCSTVTNS). Over residues 149-168 (TKPPPRTPTRANPPPPPLPT) the composition is skewed to pro residues.

It belongs to the AP2/ERF transcription factor family. ERF subfamily.

Its subcellular location is the nucleus. In terms of biological role, probable transcriptional activator that binds to the DNA sequence 5'-[AG]CCGAC-3' of the cis-acting dehydration-responsive element (DRE). The sequence is that of Dehydration-responsive element-binding protein 2E (DREB2E) from Oryza sativa subsp. japonica (Rice).